A 106-amino-acid polypeptide reads, in one-letter code: Transcriptional and immune response regulator (106 aa).

Monomer. Interacts with NOTCH2 (via ANK repeats), the interaction inhibits the nuclear translocation of NOTCH2 N2ICD. Interacts (C-terminus) with CBY1 (C-terminus), TCIM competes with CTNNB1 for the interaction with CBY1.

It is found in the cytoplasm. The protein localises to the nucleus. The protein resides in the nucleolus. It localises to the nucleus speckle. Its function is as follows. Seems to be involved in the regulation of cell growth an differentiation, may play different and opposite roles depending on the tissue or cell type. May enhance the WNT-CTNNB1 pathway by relieving antagonistic activity of CBY1. Enhances the proliferation of follicular dendritic cells. Plays a role in the mitogen-activated MAPK2/3 signaling pathway, positively regulates G1-to-S-phase transition of the cell cycle. In endothelial cells, enhances key inflammatory mediators and inflammatory response through the modulation of NF-kappaB transcriptional regulatory activity. Involved in the regulation of heat shock response, seems to play a positive feedback with HSF1 to modulate heat-shock downstream gene expression. Plays a role in the regulation of hematopoiesis even if the mechanisms are unknown. In cancers such as thyroid or lung cancer, it has been described as promoter of cell proliferation, G1-to-S-phase transition and inhibitor of apoptosis. However, it negatively regulates self-renewal of liver cancer cells via suppresion of NOTCH2 signaling. The chain is Transcriptional and immune response regulator (TCIM) from Bos taurus (Bovine).